A 522-amino-acid polypeptide reads, in one-letter code: Sulfite reductase [NADPH] flavoprotein alpha-component (522 aa).

Positions 60-198 (ITILFGSQTG…DTERWSSDAL (139 aa)) constitute a Flavodoxin-like domain. The segment at 217–242 (TLRSHQDLRSHQEQSRNRARPYDKDN) is disordered. The segment covering 220–242 (SHQDLRSHQEQSRNRARPYDKDN) has biased composition (basic and acidic residues). The region spanning 241–399 (DNPYTATLLE…VAPYRAFLQQ (159 aa)) is the FAD-binding FR-type domain.

In terms of assembly, alpha(8)-beta(8). The alpha component is a flavoprotein, the beta component is a hemoprotein. The cofactor is FAD. Requires FMN as cofactor.

It carries out the reaction hydrogen sulfide + 3 NADP(+) + 3 H2O = sulfite + 3 NADPH + 4 H(+). In terms of biological role, catalyzes the 6-electron reduction of sulfite to sulfide. This is one of several activities required for the biosynthesis of L-cysteine from sulfate. The flavo-protein component catalyzes the electron flow from NADPH -&gt; FAD -&gt; FMN to the hemoprotein component. This Thiocapsa roseopersicina protein is Sulfite reductase [NADPH] flavoprotein alpha-component (cysJ).